The sequence spans 631 residues: Golgin subfamily A member 8R (631 aa).

A disordered region spans residues 1–72; sequence MAEETQHNKL…REGPTSSATL (72 aa). Positions 38 to 50 are enriched in polar residues; that stretch reads TNGSIPETATSGG. 3 coiled-coil regions span residues 85–149, 209–247, and 303–419; these read VLDS…NTDL, ELEQ…HIEG, and SEVE…LSLM. Disordered stretches follow at residues 422–451, 502–523, and 551–610; these read PGEG…DPES, AKDA…DEGE, and NSAD…QEHP. The segment covering 507–519 has biased composition (gly residues); sequence LGGGHHQAGAQGG. The segment covering 568-577 has biased composition (basic and acidic residues); sequence AADKHGDLRE.

It belongs to the GOLGA8 family.

The protein is Golgin subfamily A member 8R of Homo sapiens (Human).